The primary structure comprises 2225 residues: Nonribisomal peptide synthetase notE' (2225 aa).

The tract at residues 24–59 (TVRESLSSSPSPLPSLASPVSSGSEPPAFGETQPQS) is disordered. Residues 28 to 49 (SLSSSPSPLPSLASPVSSGSEP) are compositionally biased toward low complexity. Residues 83-482 (QERCKEAPQS…GRRDGQLKIR (400 aa)) are adenylation 1. One can recognise a Carrier 1 domain in the interval 614 to 690 (SPTTATELML…EQAQRATPMT (77 aa)). At Ser-651 the chain carries O-(pantetheine 4'-phosphoryl)serine. Positions 730 to 1142 (EDIYPCTPLQ…DLASPLDQDL (413 aa)) are condensation 1. The tract at residues 1164 to 1563 (AQAMQQPSRQ…GRRDTQVKVR (400 aa)) is adenylation 2. A Carrier 2 domain is found at 1699–1775 (PVSHGAELRL…DLARCTGEEQ (77 aa)). Ser-1736 carries the O-(pantetheine 4'-phosphoryl)serine modification. Residues 1827-2138 (FAFHGEVSID…FILQHQNIDM (312 aa)) are condensation 2.

This sequence belongs to the NRP synthetase family.

The catalysed reaction is L-proline + L-tryptophan + 2 ATP = brevianamide F + 2 AMP + 2 diphosphate + 2 H(+). Its pathway is alkaloid biosynthesis. Its function is as follows. Nonribisomal peptide synthetase; part of the gene cluster that mediates the biosynthesis of notoamide, a fungal indole alkaloid that belongs to a family of natural products containing a characteristic bicyclo[2.2.2]diazaoctane core. The first step of notoamide biosynthesis involves coupling of L-proline and L-tryptophan by the bimodular NRPS notE', to produce cyclo-L-tryptophan-L-proline called brevianamide F. The reverse prenyltransferase notF' then acts as a deoxybrevianamide E synthase and converts brevianamide F to deoxybrevianamide E via reverse prenylation at C-2 of the indole ring leading to the bicyclo[2.2.2]diazaoctane core. Deoxybrevianamide E is further hydroxylated at C-6 of the indole ring, likely catalyzed by the cytochrome P450 monooxygenase notG', to yield 6-hydroxy-deoxybrevianamide E. 6-hydroxy-deoxybrevianamide E is a specific substrate of the prenyltransferase notC' for normal prenylation at C-7 to produce 6-hydroxy-7-prenyl-deoxybrevianamide, also called notoamide S. As the proposed pivotal branching point in notoamide biosynthesis, notoamide S can be diverted to notoamide E through an oxidative pyran ring closure putatively catalyzed by either notH' cytochrome P450 monooxygenase or the notD' FAD-linked oxidoreductase. This step would be followed by an indole 2,3-epoxidation-initiated pinacol-like rearrangement catalyzed by the notB' FAD-dependent monooxygenase leading to the formation of notoamide C and notoamide D. On the other hand notoamide S is converted to notoamide T by notH' (or notD'), a bifunctional oxidase that also functions as the intramolecular Diels-Alderase responsible for generation of (-)-notoamide T. To generate antipodal (+)-notoaminide T, notH (or notD) in Aspergillus strain MF297-2 is expected to catalyze a Diels-Alder reaction leading to the opposite stereochemistry. The remaining oxidoreductase notD' (or notH') likely catalyzes the oxidative pyran ring formation to yield (-)-stephacidin A. The FAD-dependent monooxygenase notI' is highly similar to notB' and is predicted to catalyze a similar conversion from (-)-stephacidin A to (+)-notoamide B via the 2,3-epoxidation of (-)-stephacidin A followed by a pinacol-type rearrangement. Finally, it remains unclear which enzyme could be responsible for the final hydroxylation steps leading to notoamide A and sclerotiamide. The sequence is that of Nonribisomal peptide synthetase notE' from Aspergillus versicolor.